The following is a 557-amino-acid chain: Copine-7 (557 aa).

C2 domains lie at 1-128 and 135-263; these read MSGD…TRPL and NAGK…AQWD. Residues aspartate 168, aspartate 174, aspartate 230, aspartate 232, and aspartate 238 each coordinate Ca(2+). The VWFA domain occupies 306–505; the sequence is HCTVAIDFTA…PALRDIVQFV (200 aa).

Belongs to the copine family. Requires Ca(2+) as cofactor.

It is found in the cytoplasm. Its subcellular location is the nucleus. It localises to the cell membrane. Its function is as follows. Calcium-dependent phospholipid-binding protein that may play a role in calcium-mediated intracellular processes. The sequence is that of Copine-7 from Mus musculus (Mouse).